The following is a 712-amino-acid chain: Elongation factor G (712 aa).

One can recognise a tr-type G domain in the interval 8-290 (TRYRNIGISA…AVIEFLPSPT (283 aa)). Residues 17-24 (AHIDAGKT), 88-92 (DTPGH), and 142-145 (NKMD) contribute to the GTP site.

The protein belongs to the TRAFAC class translation factor GTPase superfamily. Classic translation factor GTPase family. EF-G/EF-2 subfamily.

The protein localises to the cytoplasm. Functionally, catalyzes the GTP-dependent ribosomal translocation step during translation elongation. During this step, the ribosome changes from the pre-translocational (PRE) to the post-translocational (POST) state as the newly formed A-site-bound peptidyl-tRNA and P-site-bound deacylated tRNA move to the P and E sites, respectively. Catalyzes the coordinated movement of the two tRNA molecules, the mRNA and conformational changes in the ribosome. The chain is Elongation factor G from Acinetobacter baumannii (strain SDF).